Consider the following 68-residue polypeptide: Conotoxin Lp5.2 (68 aa).

Residues 1–19 (MRCVPVFIILLLLASPAAP) form the signal peptide. Residues 20–54 (KSLETRIQNDLIRAGLTDADLKTEKGFLSGLLNVA) constitute a propeptide that is removed on maturation.

The protein belongs to the conotoxin T superfamily. Contains 2 disulfide bonds that can be either 'C1-C3, C2-C4' or 'C1-C4, C2-C3', since these disulfide connectivities have been observed for conotoxins with cysteine framework V (for examples, see AC P0DQQ7 and AC P81755). Expressed by the venom duct.

It localises to the secreted. This is Conotoxin Lp5.2 from Conus leopardus (Leopard cone).